We begin with the raw amino-acid sequence, 672 residues long: tRNA 5-methylaminomethyl-2-thiouridine biosynthesis bifunctional protein MnmC (672 aa).

Positions 1 to 241 (MLKVTTAHIH…KRECLQGFKP (241 aa)) are tRNA (mnm(5)s(2)U34)-methyltransferase. The tract at residues 271–672 (IGGGISSLFS…RKLLKGTPVK (402 aa)) is FAD-dependent cmnm(5)s(2)U34 oxidoreductase.

This sequence in the N-terminal section; belongs to the methyltransferase superfamily. tRNA (mnm(5)s(2)U34)-methyltransferase family. The protein in the C-terminal section; belongs to the DAO family. Requires FAD as cofactor.

It localises to the cytoplasm. It catalyses the reaction 5-aminomethyl-2-thiouridine(34) in tRNA + S-adenosyl-L-methionine = 5-methylaminomethyl-2-thiouridine(34) in tRNA + S-adenosyl-L-homocysteine + H(+). In terms of biological role, catalyzes the last two steps in the biosynthesis of 5-methylaminomethyl-2-thiouridine (mnm(5)s(2)U) at the wobble position (U34) in tRNA. Catalyzes the FAD-dependent demodification of cmnm(5)s(2)U34 to nm(5)s(2)U34, followed by the transfer of a methyl group from S-adenosyl-L-methionine to nm(5)s(2)U34, to form mnm(5)s(2)U34. The sequence is that of tRNA 5-methylaminomethyl-2-thiouridine biosynthesis bifunctional protein MnmC from Mannheimia succiniciproducens (strain KCTC 0769BP / MBEL55E).